The primary structure comprises 218 residues: DNA-directed RNA polymerase III subunit RPC7-like (218 aa).

Positions 133–218 are disordered; the sequence is LPKRPPKTTE…SDDNMDEAIY (86 aa). Residues 139–160 show a composition bias toward basic and acidic residues; that stretch reads KTTEDKEETIQKLETLEKKEEE. Composition is skewed to acidic residues over residues 161 to 193 and 201 to 218; these read VTSE…EETD and NGED…EAIY.

The protein belongs to the eukaryotic RPC7 RNA polymerase subunit family. In terms of assembly, component of the RNA polymerase III (Pol III) complex consisting of 17 subunits. Pol III exists as two alternative complexes defined by the mutually exclusive incorporation of subunit POLR3G/RPC7alpha or POLR3GL/RPC7beta. Found in a trimeric complex with POLR3C/RPC3 and POLR3F/RPC6. Directly interacts with POLR3C. In terms of tissue distribution, widely expressed. Expressed in CD4-positive T cells.

The protein localises to the nucleus. In terms of biological role, DNA-dependent RNA polymerase catalyzes the transcription of DNA into RNA using the four ribonucleoside triphosphates as substrates. Specific peripheric component of RNA polymerase III which synthesizes small RNAs, such as 5S rRNA and tRNAs. In Homo sapiens (Human), this protein is DNA-directed RNA polymerase III subunit RPC7-like.